A 428-amino-acid polypeptide reads, in one-letter code: Adenylosuccinate synthetase (428 aa).

GTP contacts are provided by residues 11-17 and 39-41; these read GDEGKGK and GHT. Aspartate 12 serves as the catalytic Proton acceptor. Positions 12 and 39 each coordinate Mg(2+). IMP contacts are provided by residues 12–15, 37–40, threonine 130, arginine 144, asparagine 226, threonine 241, and arginine 305; these read DEGK and NAGH. Catalysis depends on histidine 40, which acts as the Proton donor. 301-307 provides a ligand contact to substrate; the sequence is VTTGRKR. GTP-binding positions include arginine 307, 333–335, and 415–417; these read KLD and GTG.

Belongs to the adenylosuccinate synthetase family. Homodimer. Mg(2+) is required as a cofactor.

The protein resides in the cytoplasm. The catalysed reaction is IMP + L-aspartate + GTP = N(6)-(1,2-dicarboxyethyl)-AMP + GDP + phosphate + 2 H(+). Its pathway is purine metabolism; AMP biosynthesis via de novo pathway; AMP from IMP: step 1/2. Functionally, plays an important role in the de novo pathway and in the salvage pathway of purine nucleotide biosynthesis. Catalyzes the first committed step in the biosynthesis of AMP from IMP. This chain is Adenylosuccinate synthetase, found in Lodderomyces elongisporus (strain ATCC 11503 / CBS 2605 / JCM 1781 / NBRC 1676 / NRRL YB-4239) (Yeast).